Here is a 152-residue protein sequence, read N- to C-terminus: Complexin (152 aa).

The interval 1 to 119 is disordered; that stretch reads MAAFIAKQMV…EEEDDDEFAK (119 aa). The span at 23–39 shows a compositional bias: acidic residues; sequence DEGEKEGNENAEEEAAA. 2 stretches are compositionally biased toward basic and acidic residues: residues 41-82 and 90-104; these read EEAR…VKEE and DEGR…KEEL. An interaction with the SNARE complex region spans residues 59-75; that stretch reads EEEREEMRQTIRDKYGL. Cys149 is subject to Cysteine methyl ester. Cys149 is lipidated: S-farnesyl cysteine. The propeptide at 150 to 152 is removed in mature form; it reads SLQ.

This sequence belongs to the complexin/synaphin family. Binds to the SNARE core complex containing SNAP25, synaptobrevin and syntaxin-1.

The protein localises to the membrane. The protein resides in the cytoplasm. It localises to the cytosol. Functionally, positively regulates a late step in synaptic vesicle exocytosis. This chain is Complexin (cpx), found in Doryteuthis pealeii (Longfin inshore squid).